An 832-amino-acid polypeptide reads, in one-letter code: Leucine--tRNA ligase (832 aa).

Positions 58-68 match the 'HIGH' region motif; that stretch reads PYPSGDLHMGH. Positions 598 to 602 match the 'KMSKS' region motif; that stretch reads AMSKS. Lys601 is a binding site for ATP.

It belongs to the class-I aminoacyl-tRNA synthetase family.

The protein resides in the cytoplasm. The enzyme catalyses tRNA(Leu) + L-leucine + ATP = L-leucyl-tRNA(Leu) + AMP + diphosphate. The protein is Leucine--tRNA ligase of Acidothermus cellulolyticus (strain ATCC 43068 / DSM 8971 / 11B).